Consider the following 486-residue polypeptide: Glutamyl-tRNA(Gln) amidotransferase subunit A (486 aa).

Active-site charge relay system residues include Lys-74 and Ser-149. The Acyl-ester intermediate role is filled by Ser-173.

The protein belongs to the amidase family. GatA subfamily. As to quaternary structure, heterotrimer of A, B and C subunits.

The enzyme catalyses L-glutamyl-tRNA(Gln) + L-glutamine + ATP + H2O = L-glutaminyl-tRNA(Gln) + L-glutamate + ADP + phosphate + H(+). Allows the formation of correctly charged Gln-tRNA(Gln) through the transamidation of misacylated Glu-tRNA(Gln) in organisms which lack glutaminyl-tRNA synthetase. The reaction takes place in the presence of glutamine and ATP through an activated gamma-phospho-Glu-tRNA(Gln). This Prochlorococcus marinus (strain MIT 9313) protein is Glutamyl-tRNA(Gln) amidotransferase subunit A.